We begin with the raw amino-acid sequence, 239 residues long: Endolytic peptidoglycan transglycosylase RlpA (239 aa).

An N-terminal signal peptide occupies residues 1 to 25 (MTLTRKTLFLLTAAFGIHSFQTASA). The 80-residue stretch at 160–239 (VAENKDIFID…GMVRAVLTAG (80 aa)) folds into the SPOR domain.

It belongs to the RlpA family.

In terms of biological role, lytic transglycosylase with a strong preference for naked glycan strands that lack stem peptides. This is Endolytic peptidoglycan transglycosylase RlpA from Neisseria meningitidis serogroup A / serotype 4A (strain DSM 15465 / Z2491).